A 718-amino-acid chain; its full sequence is MEGKAADPLLCDSLILWLQTFNTAAPCRNVQDLTNGVAMAQVLHQIDVAWFDASWLNRIKEDVGDNWRIKSSNLKKILQGIMDYYHEFLDQQISEELIPDLNKISENSDPTELGRLMQLILGCAVNCERKQEHIQNIMTLEESVQHVVMTAIQELMSKEAMGPSASDVSSEMEQQLKKALEDLQEAIAEKEELAQRCQELDLQVAALQDEKNSLVSENEILNDRLEQLDDSLDDPNTVVAKKYFHAQLQLEQLQEENFRLEAAKDDYRVHCEDLEKQLIELQHRNNELTSLAEESRALKDENDILRAAADKASKLESTVEVYRKKLQDLNDFRRQVKSLQETNMMYMHNTVSLEDELREANAARAQLETYKRQVQELHNKLSEESKRADKLAFEMKRLEEKHEALVKEKERLVIQCDALKETNEELRYSQMQQDHLSRTDASRIKSHDNLAAELLPVEYREMFIQLQHENKMLLLQQEGSENERIMELQKQLEQKQWTVNELGTEKRLNKERIGELQQQIEDLQKTLQEQGSKTEGSSNLKQKLAAHMEKLSEVHDELQKKEAALAELQPDVSQNPQKIGELEAALRKKDEDMKAMEERYKMYLEKARNVIKTLDPKLNPASAEIMLLRKQITERDKKIEALEAEYKLAKLRDYEENLIVTAWYNKSLTLQKLGMEARLLGSGGACRDGPGRSFLAQQRHVTNTRRNLPVKVPSATSD.

The Calponin-homology (CH) domain maps to 8–124 (PLLCDSLILW…RLMQLILGCA (117 aa)). Coiled coils occupy residues 164–428 (SASD…ELRY) and 473–652 (LLLQ…AKLR).

Belongs to the hook family. In terms of assembly, interacts with microtubules.

The protein resides in the cytoplasm. The protein localises to the cytoskeleton. May function to promote vesicle trafficking and/or fusion. This chain is Protein Hook homolog 1 (HOOK1), found in Gallus gallus (Chicken).